The sequence spans 627 residues: Xaa-Pro aminopeptidase 1 (627 aa).

A peptide contacts are provided by Arg-88 and His-405. Mn(2+)-binding residues include Asp-424, Asp-435, and His-498. Residues His-498, His-507, and Glu-533 each coordinate a peptide. The Mn(2+) site is built by Glu-533 and Glu-547.

This sequence belongs to the peptidase M24B family. As to quaternary structure, homodimer. It depends on Mn(2+) as a cofactor.

Its subcellular location is the cytoplasm. It is found in the cytosol. It carries out the reaction Release of any N-terminal amino acid, including proline, that is linked to proline, even from a dipeptide or tripeptide.. In terms of biological role, metalloaminopeptidase that catalyzes the removal of a penultimate prolyl residue from the N-termini of peptides, such as Arg-Pro-Pro. In Dictyostelium discoideum (Social amoeba), this protein is Xaa-Pro aminopeptidase 1 (xpnpep1).